The primary structure comprises 458 residues: UDP-N-acetylmuramoylalanine--D-glutamate ligase (458 aa).

An ATP-binding site is contributed by 124–130 (GSDGKTT).

The protein belongs to the MurCDEF family.

Its subcellular location is the cytoplasm. The catalysed reaction is UDP-N-acetyl-alpha-D-muramoyl-L-alanine + D-glutamate + ATP = UDP-N-acetyl-alpha-D-muramoyl-L-alanyl-D-glutamate + ADP + phosphate + H(+). Its pathway is cell wall biogenesis; peptidoglycan biosynthesis. Functionally, cell wall formation. Catalyzes the addition of glutamate to the nucleotide precursor UDP-N-acetylmuramoyl-L-alanine (UMA). The chain is UDP-N-acetylmuramoylalanine--D-glutamate ligase from Clostridium botulinum (strain 657 / Type Ba4).